A 444-amino-acid chain; its full sequence is Glutamyl-tRNA reductase (444 aa).

Residues 49–52 (TCNR), Ser-109, 114–116 (ETQ), and Gln-120 each bind substrate. The Nucleophile role is filled by Cys-50. Residue 189–194 (GAGKMG) participates in NADP(+) binding.

The protein belongs to the glutamyl-tRNA reductase family. As to quaternary structure, homodimer.

It catalyses the reaction (S)-4-amino-5-oxopentanoate + tRNA(Glu) + NADP(+) = L-glutamyl-tRNA(Glu) + NADPH + H(+). The protein operates within porphyrin-containing compound metabolism; protoporphyrin-IX biosynthesis; 5-aminolevulinate from L-glutamyl-tRNA(Glu): step 1/2. In terms of biological role, catalyzes the NADPH-dependent reduction of glutamyl-tRNA(Glu) to glutamate 1-semialdehyde (GSA). This Bacillus cereus (strain 03BB102) protein is Glutamyl-tRNA reductase.